The primary structure comprises 417 residues: D-glycerate 2-kinase (417 aa).

This sequence belongs to the glycerate kinase type-1 family. As to quaternary structure, homodimer. Mg(2+) serves as cofactor.

It catalyses the reaction (R)-glycerate + ATP = (2R)-2-phosphoglycerate + ADP + H(+). In terms of biological role, involved in the degradation of serine via 3-hydroxypyruvate. Catalyzes the ATP-dependent phosphorylation of D-glycerate to 2-phosphoglycerate. The sequence is that of D-glycerate 2-kinase from Thermotoga maritima (strain ATCC 43589 / DSM 3109 / JCM 10099 / NBRC 100826 / MSB8).